Here is a 396-residue protein sequence, read N- to C-terminus: Serine/threonine-protein kinase 32A (396 aa).

The N-myristoyl glycine moiety is linked to residue Gly-2. In terms of domain architecture, Protein kinase spans 23–281; that stretch reads FEILRAIGKG…LSDVQNFPYM (259 aa). Residues 29-37 and Lys-52 each bind ATP; that span reads IGKGSFGKV. Asp-146 serves as the catalytic Proton acceptor. Positions 373-396 are disordered; sequence KRQPNLALEQTKDPQGEDGQNNNL.

It belongs to the protein kinase superfamily. Ser/Thr protein kinase family. Requires Mg(2+) as cofactor.

The protein localises to the cell membrane. It carries out the reaction L-seryl-[protein] + ATP = O-phospho-L-seryl-[protein] + ADP + H(+). The catalysed reaction is L-threonyl-[protein] + ATP = O-phospho-L-threonyl-[protein] + ADP + H(+). The chain is Serine/threonine-protein kinase 32A (STK32A) from Homo sapiens (Human).